The primary structure comprises 496 residues: Probable zinc metalloprotease SNOG_06590 (496 aa).

Residues 1–20 (MRSSMFFAVCAAAALQTALS) form the signal peptide. An N-linked (GlcNAc...) asparagine glycan is attached at asparagine 138. Zn(2+) is bound by residues histidine 161, aspartate 181, and glutamate 226. Asparagine 241 carries an N-linked (GlcNAc...) asparagine glycan. Position 253 (aspartate 253) interacts with Zn(2+). Residues asparagine 282, asparagine 361, asparagine 409, asparagine 415, and asparagine 457 are each glycosylated (N-linked (GlcNAc...) asparagine). Positions 402–496 (EPMNVGINTT…PFPFGCTRNC (95 aa)) constitute a Fibronectin type-III domain.

This sequence belongs to the peptidase M28 family. M28B subfamily. It depends on Zn(2+) as a cofactor.

It localises to the secreted. The sequence is that of Probable zinc metalloprotease SNOG_06590 from Phaeosphaeria nodorum (strain SN15 / ATCC MYA-4574 / FGSC 10173) (Glume blotch fungus).